Reading from the N-terminus, the 324-residue chain is Calpain-2 catalytic subunit (324 aa).

The interval 1 to 138 is domain III; that stretch reads YPNTFWMNPQ…KKADYQVVDD (138 aa). A linker region spans residues 139-153; the sequence is EIEADLEENDASEDD. The interval 158 to 324 is domain IV; the sequence is FRRLFAQLAG…LISWLCFSVL (167 aa). Residues A166, D169, E171, E176, D209, D211, S213, K215, E220, D239, D241, S243, T245, E250, D282, and N285 each coordinate Ca(2+). EF-hand domains follow at residues 190-224 and 226-261; these read DIKS…FYIL and TKIQ…AGFK.

The protein belongs to the peptidase C2 family. Forms a heterodimer with a small (regulatory) subunit (CAPNS1). Interacts with CPEB3; this leads to cleavage of CPEB3. It depends on Ca(2+) as a cofactor. Ubiquitous.

The protein localises to the cytoplasm. It is found in the cell membrane. The enzyme catalyses Broad endopeptidase specificity.. Its activity is regulated as follows. Activated by 200-1000 micromolar concentrations of calcium and inhibited by calpastatin. Functionally, calcium-regulated non-lysosomal thiol-protease which catalyzes limited proteolysis of substrates involved in cytoskeletal remodeling and signal transduction. Proteolytically cleaves MYOC at 'Arg-226'. Proteolytically cleaves CPEB3 following neuronal stimulation which abolishes CPEB3 translational repressor activity, leading to translation of CPEB3 target mRNAs. The polypeptide is Calpain-2 catalytic subunit (CAPN2) (Sus scrofa (Pig)).